The chain runs to 245 residues: tRNA pseudouridine synthase A 2 (245 aa).

Asp53 functions as the Nucleophile in the catalytic mechanism. Tyr111 is a substrate binding site.

The protein belongs to the tRNA pseudouridine synthase TruA family. As to quaternary structure, homodimer.

It catalyses the reaction uridine(38/39/40) in tRNA = pseudouridine(38/39/40) in tRNA. In terms of biological role, formation of pseudouridine at positions 38, 39 and 40 in the anticodon stem and loop of transfer RNAs. The polypeptide is tRNA pseudouridine synthase A 2 (Bacillus thuringiensis subsp. konkukian (strain 97-27)).